The sequence spans 585 residues: Mitochondrial sodium/calcium exchanger protein (585 aa).

A signal peptide spans 1–26 (MASRWLALLWAPVFLCVALILETASG). Residues 27–95 (TGDPSTKAHG…GIFCYFPPNL (69 aa)) are Extracellular-facing. An N-linked (GlcNAc...) asparagine glycan is attached at N46. Residues 96-116 (LPLAITLYVFWLLYLFLILGV) form a helical membrane-spanning segment. Residues 117–140 (TAAKFFCPNLSAISTNLKLSHNVA) are Cytoplasmic-facing. Residues 141-161 (GVTFLAFGNGAPDIFSALVAF) form a helical membrane-spanning segment. Residues 162–168 (SDPRTAG) are Extracellular-facing. Residues 169–189 (LAIGALFGAGVLVTTVVAGGI) form a helical membrane-spanning segment. At 190–205 (TILHPFMAASRPFLRD) the chain is on the cytoplasmic side. Residues 206-226 (IAFYMVAVFLTFTALYLGRIT) form a helical membrane-spanning segment. Residues 227–229 (LTW) lie on the Extracellular side of the membrane. The chain crosses the membrane as a helical span at residues 230 to 250 (ALGYLGLYVFYVVTVIICTWV). Residues 251–325 (YQRQRSRSLV…KWRTQSISWR (75 aa)) are Cytoplasmic-facing. At S258 the chain carries Phosphoserine; by PKA. The chain crosses the membrane as a helical span at residues 326-346 (VLKVVKLPVEFLLLLTVPVVD). At 347-360 (PDKDDRNWKRPLNC) the chain is on the extracellular side. Residues 361 to 381 (LQLVISPLVLVLTLQSGVYGI) traverse the membrane as a helical segment. Residues 382–383 (YE) are Cytoplasmic-facing. Residues 384 to 404 (IGGLLPVWAVVVIVGTALASV) traverse the membrane as a helical segment. The Extracellular portion of the chain corresponds to 405–416 (TFFATSNREPPR). Residues 417 to 437 (LHWLFAFLGFLTSALWINAAA) traverse the membrane as a helical segment. At 438 to 445 (TEVVNILR) the chain is on the cytoplasmic side. Residues 446 to 466 (SLGVIFRLSNTVLGLTLLAWG) form a helical membrane-spanning segment. Topologically, residues 467–491 (NSIGDAFSDFTLARQGYPRMAFSAC) are extracellular. A helical membrane pass occupies residues 492-512 (FGGIIFNILVGVGLGCLLQII). The Cytoplasmic segment spans residues 513-525 (RNHVVEVKLEPDG). A helical transmembrane segment spans residues 526–546 (LLVWVLASALGLSLIFSLVSV). The Extracellular portion of the chain corresponds to 547–559 (PLQCFQLSKAYGL). A helical membrane pass occupies residues 560–580 (CLLLFYICFLVVVLLTEFGVI). The Cytoplasmic portion of the chain corresponds to 581-585 (HLKKA).

It belongs to the Ca(2+):cation antiporter (CaCA) (TC 2.A.19) family. SLC24A subfamily. Post-translationally, phosphorylation at Ser-258 by PKA prevents calcium overload. Ubiquitously expressed. Expressed in dental tissues.

It is found in the mitochondrion inner membrane. The protein resides in the cell membrane. It catalyses the reaction Ca(2+)(in) + 3 Na(+)(out) = Ca(2+)(out) + 3 Na(+)(in). The catalysed reaction is 3 Li(+)(out) + Ca(2+)(in) = 3 Li(+)(in) + Ca(2+)(out). Inhibited by the sodium/calcium exchanger inhibitor CGP-37157. Strongly inhibited by zinc. Mitochondrial sodium/calcium antiporter that mediates sodium-dependent calcium efflux from mitochondrion, by mediating the exchange of 3 sodium ions per 1 calcium ion. Plays a central role in mitochondrial calcium homeostasis by mediating mitochondrial calcium extrusion: calcium efflux is essential for mitochondrial function and cell survival, notably in cardiomyocytes. Regulates rates of glucose-dependent insulin secretion in pancreatic beta-cells during the first phase of insulin secretion: acts by mediating efflux of calcium from mitochondrion, thereby affecting cytoplasmic calcium responses. Required for store-operated Ca(2+) entry (SOCE) and Ca(2+) release-activated Ca(2+) (CRAC) channel regulation: sodium transport by SLC8B1 leads to promote calcium-shuttling that modulates mitochondrial redox status, thereby regulating SOCE activity. Involved in B-lymphocyte chemotaxis. Able to transport Ca(2+) in exchange of either Li(+) or Na(+), explaining how Li(+) catalyzes Ca(2+) exchange. In contrast to other members of the family its function is independent of K(+). The protein is Mitochondrial sodium/calcium exchanger protein of Mus musculus (Mouse).